The following is a 619-amino-acid chain: Zinc finger protein 668 (619 aa).

At M1 the chain carries N-acetylmethionine. Phosphoserine is present on S10. A C2H2-type 1 zinc finger spans residues 22–44; the sequence is YKCLFCTKTFPNAPRAARHAATH. A disordered region spans residues 36–74; that stretch reads RAARHAATHTPTDCTEEVREAQPKVDTEPKAEEASGDKV. A compositionally biased stretch (basic and acidic residues) spans 51–71; the sequence is EEVREAQPKVDTEPKAEEASG. Residues K59, K65, and K80 each participate in a glycyl lysine isopeptide (Lys-Gly) (interchain with G-Cter in SUMO2) cross-link. C2H2-type zinc fingers lie at residues 84-106, 112-134, 140-162, 168-190, 196-218, 224-246, 252-274, 280-302, 308-330, 336-358, and 364-386; these read YACP…GRSH, FPCP…LASH, FRCT…QRGH, YACP…RRTH, YSCE…ERSH, FLCS…QRIH, YRCP…ERTH, FLCP…QRAH, YRCE…RRVH, FKCL…ALVH, and FRCE…SRMH. Residue K154 forms a Glycyl lysine isopeptide (Lys-Gly) (interchain with G-Cter in SUMO2) linkage. S387 carries the phosphoserine modification. A C2H2-type 13 zinc finger spans residues 392 to 414; that stretch reads FHCNACGKSFVVLSSLRKHERTH. The interval 491–513 is disordered; that stretch reads VGEAPSTLGDAGEVGGEETDEKP. K512 is covalently cross-linked (Glycyl lysine isopeptide (Lys-Gly) (interchain with G-Cter in SUMO2)). 3 C2H2-type zinc fingers span residues 516–538, 544–566, and 572–594; these read FVCR…ERSH, FPCT…SRTH, and YSCS…ERTH.

Belongs to the krueppel C2H2-type zinc-finger protein family.

It is found in the nucleus. May be involved in transcriptional regulation. May play a role in DNA repair process. The protein is Zinc finger protein 668 (Znf668) of Mus musculus (Mouse).